Consider the following 319-residue polypeptide: Beta-ketoacyl-[acyl-carrier-protein] synthase III (319 aa).

Active-site residues include C112 and H246. The interval Q247–R251 is ACP-binding. N276 is an active-site residue.

This sequence belongs to the thiolase-like superfamily. FabH family. As to quaternary structure, homodimer.

Its subcellular location is the cytoplasm. It carries out the reaction malonyl-[ACP] + acetyl-CoA + H(+) = 3-oxobutanoyl-[ACP] + CO2 + CoA. It functions in the pathway lipid metabolism; fatty acid biosynthesis. Its function is as follows. Catalyzes the condensation reaction of fatty acid synthesis by the addition to an acyl acceptor of two carbons from malonyl-ACP. Catalyzes the first condensation reaction which initiates fatty acid synthesis and may therefore play a role in governing the total rate of fatty acid production. Possesses both acetoacetyl-ACP synthase and acetyl transacylase activities. Its substrate specificity determines the biosynthesis of branched-chain and/or straight-chain of fatty acids. The protein is Beta-ketoacyl-[acyl-carrier-protein] synthase III of Pseudoalteromonas atlantica (strain T6c / ATCC BAA-1087).